The chain runs to 444 residues: Tol-Pal system protein TolB (444 aa).

The first 31 residues, 1–31, serve as a signal peptide directing secretion; the sequence is MSFDLNRRQLMISAATAAGALALGPARDAFG.

The protein belongs to the TolB family. In terms of assembly, the Tol-Pal system is composed of five core proteins: the inner membrane proteins TolA, TolQ and TolR, the periplasmic protein TolB and the outer membrane protein Pal. They form a network linking the inner and outer membranes and the peptidoglycan layer.

The protein resides in the periplasm. In terms of biological role, part of the Tol-Pal system, which plays a role in outer membrane invagination during cell division and is important for maintaining outer membrane integrity. This Rhodopseudomonas palustris (strain ATCC BAA-98 / CGA009) protein is Tol-Pal system protein TolB.